Consider the following 448-residue polypeptide: tRNA methyltransferase 10 homolog C (448 aa).

The N-terminal 48 residues, 1 to 48 (MAFVNTLLRTIRCSAVHTLVQEGRSLSLLKASHQLTQSRKIMLSNHVR), are a transit peptide targeting the mitochondrion. The stretch at 137 to 165 (REVMKTNRKEKKKELKESKSKIESLDQLE) forms a coiled coil. The interval 144–167 (RKEKKKELKESKSKIESLDQLETK) is disordered. An SAM-dependent MTase TRM10-type domain is found at 190–382 (QRWKCVQAMK…SFVPNRKHDG (193 aa)). Residues 429–448 (ERTDDTSIRSTRKRWWEEEN) are disordered.

The protein belongs to the class IV-like SAM-binding methyltransferase superfamily. TRM10 family. As to quaternary structure, component of mitochondrial ribonuclease P. Interacts with HSD17B10/MRPP2.

The protein resides in the mitochondrion matrix. Its subcellular location is the mitochondrion nucleoid. It catalyses the reaction adenosine(9) in tRNA + S-adenosyl-L-methionine = N(1)-methyladenosine(9) in tRNA + S-adenosyl-L-homocysteine + H(+). The enzyme catalyses guanosine(9) in tRNA + S-adenosyl-L-methionine = N(1)-methylguanosine(9) in tRNA + S-adenosyl-L-homocysteine + H(+). The catalysed reaction is an adenosine in mRNA + S-adenosyl-L-methionine = an N(1)-methyladenosine in mRNA + S-adenosyl-L-homocysteine + H(+). Mitochondrial tRNA N(1)-methyltransferase involved in mitochondrial tRNA maturation. Component of mitochondrial ribonuclease P, which cleaves tRNA molecules in their 5'-ends. Together with hsd17b10/mrpp2, forms a subcomplex of the mitochondrial ribonuclease P, named MRPP1-MRPP2 subcomplex, which displays functions that are independent of the ribonuclease P activity. The MRPP1-MRPP2 subcomplex catalyzes the formation of N(1)-methylguanine and N(1)-methyladenine at position 9 (m1G9 and m1A9, respectively) in tRNAs; trmt10c/mrpp1 acting as the catalytic N(1)-methyltransferase subunit. The MRPP1-MRPP2 subcomplex also acts as a tRNA maturation platform: following 5'-end cleavage by the mitochondrial ribonuclease P complex, the MRPP1-MRPP2 subcomplex enhances the efficiency of 3'-processing catalyzed by ELAC2, retains the tRNA product after elac2 processing and presents the nascent tRNA to the mitochondrial CCA tRNA nucleotidyltransferase TRNT1 enzyme. In addition to tRNA N(1)-methyltransferase activity, trmt10c/mrpp1 also acts as a mRNA N(1)-methyltransferase by mediating methylation of adenosine residues at the N(1) position of MT-ND5 mRNA. In Xenopus tropicalis (Western clawed frog), this protein is tRNA methyltransferase 10 homolog C.